The following is a 439-amino-acid chain: Probable cinnamyl alcohol dehydrogenase 8C (439 aa).

Residue C120 participates in Zn(2+) binding. NADP(+) is bound at residue T122. 7 residues coordinate Zn(2+): H142, E143, C173, C176, C179, C187, and C239. NADP(+) is bound by residues T243, 264–269, 287–292, T327, G351, and 374–376; these read GLGGLG, STSPGK, and NCV.

Belongs to the zinc-containing alcohol dehydrogenase family. As to quaternary structure, homodimer. The cofactor is Zn(2+).

It catalyses the reaction (E)-cinnamyl alcohol + NADP(+) = (E)-cinnamaldehyde + NADPH + H(+). It carries out the reaction (E)-coniferol + NADP(+) = (E)-coniferaldehyde + NADPH + H(+). The catalysed reaction is (E)-sinapyl alcohol + NADP(+) = (E)-sinapaldehyde + NADPH + H(+). The enzyme catalyses (E)-4-coumaroyl alcohol + NADP(+) = (E)-4-coumaraldehyde + NADPH + H(+). It catalyses the reaction (E)-caffeyl alcohol + NADP(+) = (E)-caffeyl aldehyde + NADPH + H(+). It functions in the pathway aromatic compound metabolism; phenylpropanoid biosynthesis. In terms of biological role, involved in lignin biosynthesis. Catalyzes the final step specific for the production of lignin monomers. Catalyzes the NADPH-dependent reduction of coniferaldehyde, 5-hydroxyconiferaldehyde, sinapaldehyde, 4-coumaraldehyde and caffeyl aldehyde to their respective alcohols. The protein is Probable cinnamyl alcohol dehydrogenase 8C of Oryza sativa subsp. japonica (Rice).